Consider the following 781-residue polypeptide: 5-methyltetrahydropteroyltriglutamate--homocysteine methyltransferase (781 aa).

Residues 20–23 (RELK) and Lys131 each bind 5-methyltetrahydropteroyltri-L-glutamate. Residues 453–455 (IGS) and Glu506 contribute to the L-homocysteine site. L-methionine-binding positions include 453-455 (IGS) and Glu506. Residues 537 to 538 (RC) and Trp583 each bind 5-methyltetrahydropteroyltri-L-glutamate. Asp621 serves as a coordination point for L-homocysteine. L-methionine is bound at residue Asp621. Residue Glu627 participates in 5-methyltetrahydropteroyltri-L-glutamate binding. His663, Cys665, and Glu687 together coordinate Zn(2+). His716 (proton donor) is an active-site residue. Cys748 is a Zn(2+) binding site.

Belongs to the vitamin-B12 independent methionine synthase family. Zn(2+) is required as a cofactor.

The catalysed reaction is 5-methyltetrahydropteroyltri-L-glutamate + L-homocysteine = tetrahydropteroyltri-L-glutamate + L-methionine. It participates in amino-acid biosynthesis; L-methionine biosynthesis via de novo pathway; L-methionine from L-homocysteine (MetE route): step 1/1. Its function is as follows. Catalyzes the transfer of a methyl group from 5-methyltetrahydrofolate to homocysteine resulting in methionine formation. The chain is 5-methyltetrahydropteroyltriglutamate--homocysteine methyltransferase from Bradyrhizobium diazoefficiens (strain JCM 10833 / BCRC 13528 / IAM 13628 / NBRC 14792 / USDA 110).